A 253-amino-acid polypeptide reads, in one-letter code: RAD51-associated protein 1 (253 aa).

Positions 32-51 (APLTKKSRTQPKEPKKENKK) are interaction with DNA. Disordered regions lie at residues 33 to 74 (PLTK…TSLD), 141 to 169 (DREHVTDSEPVTIPDEESEEDSDYREGND), and 184 to 244 (KKIK…WVPP). Residues 154 to 169 (PDEESEEDSDYREGND) show a composition bias toward acidic residues. The span at 184 to 195 (KKIKRQTRKEKK) shows a compositional bias: basic residues. An interaction with DNA region spans residues 190–241 (TRKEKKTPKSENNTTVMELKSEQTQKMMSTSSEPVGRPLYTSSPVTNKKPKW). A compositionally biased stretch (polar residues) spans 199–222 (SENNTTVMELKSEQTQKMMSTSSE).

As to quaternary structure, monomer.

The protein resides in the chromosome. It is found in the nucleus. Functionally, structure-specific DNA-binding protein involved in DNA repair by promoting RAD51-mediated homologous recombination. Acts by stimulating D-Loop formation by RAD51: specifically enhances joint molecule formation through its structure-specific DNA interaction and its interaction with RAD51. Binds single-stranded DNA (ssDNA), double-stranded DNA (dsDNA) and secondary DNA structures, such as D-loop structures: has a strong preference for branched-DNA structures that are obligatory intermediates during joint molecule formation. Involved in mitotic recombination-dependent replication fork processing. Also involved in meiosis by promoting DMC1-mediated homologous meiotic recombination. The sequence is that of RAD51-associated protein 1 from Gallus gallus (Chicken).